A 404-amino-acid polypeptide reads, in one-letter code: Zinc finger protein zfs1 (404 aa).

Residues 134 to 149 (SYLHSGSSPHGNTSNH) are compositionally biased toward polar residues. Disordered stretches follow at residues 134 to 168 (SYLHSGSSPHGNTSNHPSPISSLESLPSRSSTGSG) and 259 to 322 (SNAS…APNG). The segment covering 150–168 (PSPISSLESLPSRSSTGSG) has biased composition (low complexity). The segment covering 259 to 283 (SNASIRNAPSNLSKQFSPSGNSPLT) has biased composition (polar residues). The span at 304 to 317 (GSASHPHGSGSSNG) shows a compositional bias: low complexity. 2 C3H1-type zinc fingers span residues 326–354 (LYKTEPCKNWQISGTCRYGSKCQFAHGNQ) and 364–392 (KYKSERCRSFMMYGYCPYGLRCCFLHDES).

Interacts with moc3.

It localises to the cytoplasm. The protein resides in the nucleus. In terms of biological role, binds to specific AU-rich elements (ARE) in the 3'-untranslated region of target mRNAs and promotes their degradation. Binds to ARE present in the arz1 mRNA and stimulates the rate of arz1 mRNA decay. Required for coordination of septum formation with exit from mitosis. Involved in the mating response pathway. Induces sexual development and ascus formation. This is Zinc finger protein zfs1 (zfs1) from Schizosaccharomyces pombe (strain 972 / ATCC 24843) (Fission yeast).